The primary structure comprises 239 residues: Ribonuclease PH (239 aa).

Phosphate-binding positions include Arg-87 and 125–127 (GTR).

This sequence belongs to the RNase PH family. In terms of assembly, homohexameric ring arranged as a trimer of dimers.

The enzyme catalyses tRNA(n+1) + phosphate = tRNA(n) + a ribonucleoside 5'-diphosphate. In terms of biological role, phosphorolytic 3'-5' exoribonuclease that plays an important role in tRNA 3'-end maturation. Removes nucleotide residues following the 3'-CCA terminus of tRNAs; can also add nucleotides to the ends of RNA molecules by using nucleoside diphosphates as substrates, but this may not be physiologically important. Probably plays a role in initiation of 16S rRNA degradation (leading to ribosome degradation) during starvation. The chain is Ribonuclease PH from Saccharophagus degradans (strain 2-40 / ATCC 43961 / DSM 17024).